We begin with the raw amino-acid sequence, 241 residues long: Small ribosomal subunit protein uS2 (241 aa).

Belongs to the universal ribosomal protein uS2 family.

This Proteus mirabilis (strain HI4320) protein is Small ribosomal subunit protein uS2.